Reading from the N-terminus, the 163-residue chain is Nucleotide-binding protein HDEF_1968 (163 aa).

This sequence belongs to the YajQ family.

In terms of biological role, nucleotide-binding protein. In Hamiltonella defensa subsp. Acyrthosiphon pisum (strain 5AT), this protein is Nucleotide-binding protein HDEF_1968.